Consider the following 354-residue polypeptide: UDP-2,3-diacetamido-2,3-dideoxy-D-glucuronate 2-epimerase (354 aa).

The protein belongs to the UDP-N-acetylglucosamine 2-epimerase family.

It carries out the reaction UDP-2,3-diacetamido-2,3-dideoxy-alpha-D-glucuronate = UDP-2,3-diacetamido-2,3-dideoxy-alpha-D-mannuronate. Its pathway is bacterial outer membrane biogenesis; LPS O-antigen biosynthesis. In terms of biological role, plays a role in the biosynthesis of B-band O antigen for serotype O5. Catalyzes the epimerization of UDP-2,3-diacetamido-2,3-dideoxy-alpha-D-glucuronic acid (UDP-alpha-D-GlcNAc3NAcA) to UDP-2,3-diacetamido-2,3-dideoxy-alpha-D-mannuronic acid (UDP-alpha-D-ManNAc3NAcA). Exhibits high specificity towards the substrate as UDP-alpha-D-GlcNAc, UDP-alpha-D-GlcNAcA (UDP-2-acetamido-2-deoxy-alpha-D-glucuronic acid) and UDP-alpha-D-GlcNAc3NAc (UDP-2,3-diacetamido-2,3-dideoxy-alpha-D-glucose) cannot act as substrates. The polypeptide is UDP-2,3-diacetamido-2,3-dideoxy-D-glucuronate 2-epimerase (Pseudomonas aeruginosa (strain ATCC 15692 / DSM 22644 / CIP 104116 / JCM 14847 / LMG 12228 / 1C / PRS 101 / PAO1)).